The chain runs to 317 residues: MTDLPFTLDQLRILKAIAKEGSFKKAANSLYVSQPAISLQIQNLERQLNVALFERGNKKATLTEAGSLLLRYGGRILALCEETCRALDDLQNLQGGTLIIGASQTTGTYLMPRLIGLFRQRYPQVAVQLQVHSTRLISWSVANGQVDLAIIGGEVPTELQDVLQVTSYAEDELALILPKSHPFSKLGDIQKEDLYRLRFIALDTQSTIRKVIDKVLSQHGIDSSRFKIEMELNSIEAIKNAVQSGLGAAFVSVSAIAKELELGIVHWAQIENVTIKRMLSIIVNPNRYKSKATETFSQEILTLFVTPSQHKTLGDKL.

The HTH lysR-type domain maps to 6-63 (FTLDQLRILKAIAKEGSFKKAANSLYVSQPAISLQIQNLERQLNVALFERGNKKATLT). A DNA-binding region (H-T-H motif) is located at residues 23 to 42 (FKKAANSLYVSQPAISLQIQ).

It belongs to the LysR transcriptional regulatory family.

Its subcellular location is the plastid. It is found in the chloroplast. In terms of biological role, trans-acting transcriptional regulator of RuBisCO genes (rbcL and rbcS) expression. This is Probable RuBisCO transcriptional regulator (rbcR) from Porphyra purpurea (Red seaweed).